The primary structure comprises 73 residues: Small ribosomal subunit protein bS18 (73 aa).

Belongs to the bacterial ribosomal protein bS18 family. Part of the 30S ribosomal subunit. Forms a tight heterodimer with protein bS6.

In terms of biological role, binds as a heterodimer with protein bS6 to the central domain of the 16S rRNA, where it helps stabilize the platform of the 30S subunit. The protein is Small ribosomal subunit protein bS18 of Prochlorococcus marinus (strain SARG / CCMP1375 / SS120).